The primary structure comprises 696 residues: Polyribonucleotide nucleotidyltransferase (696 aa).

Residues Asp-483 and Asp-489 each contribute to the Mg(2+) site. The region spanning 550-609 (PRITTIYVKTDKIRDVIGSGGKNIRGITEATGVTIDIDDTGKINIASTDKAACDLAIKMI) is the KH domain. An S1 motif domain is found at 619–687 (GKLYMGLVKK…KQGKIKLSRK (69 aa)).

Belongs to the polyribonucleotide nucleotidyltransferase family. The cofactor is Mg(2+).

Its subcellular location is the cytoplasm. The catalysed reaction is RNA(n+1) + phosphate = RNA(n) + a ribonucleoside 5'-diphosphate. Involved in mRNA degradation. Catalyzes the phosphorolysis of single-stranded polyribonucleotides processively in the 3'- to 5'-direction. The protein is Polyribonucleotide nucleotidyltransferase of Geotalea uraniireducens (strain Rf4) (Geobacter uraniireducens).